A 547-amino-acid chain; its full sequence is CTP synthase (547 aa).

Positions methionine 1–isoleucine 265 are amidoligase domain. Serine 13 is a CTP binding site. Serine 13 contributes to the UTP binding site. ATP contacts are provided by residues serine 14–leucine 19 and aspartate 71. Mg(2+)-binding residues include aspartate 71 and glutamate 139. Residues aspartate 146–glutamate 148, lysine 186–glutamine 191, and lysine 222 contribute to the CTP site. UTP is bound by residues lysine 186–glutamine 191 and lysine 222. In terms of domain architecture, Glutamine amidotransferase type-1 spans arginine 291–leucine 546. Glycine 353 is an L-glutamine binding site. Cysteine 380 acts as the Nucleophile; for glutamine hydrolysis in catalysis. L-glutamine-binding positions include leucine 381 to glutamine 384, glutamate 404, and arginine 474. Active-site residues include histidine 519 and glutamate 521.

This sequence belongs to the CTP synthase family. Homotetramer.

The enzyme catalyses UTP + L-glutamine + ATP + H2O = CTP + L-glutamate + ADP + phosphate + 2 H(+). It carries out the reaction L-glutamine + H2O = L-glutamate + NH4(+). The catalysed reaction is UTP + NH4(+) + ATP = CTP + ADP + phosphate + 2 H(+). The protein operates within pyrimidine metabolism; CTP biosynthesis via de novo pathway; CTP from UDP: step 2/2. Its activity is regulated as follows. Allosterically activated by GTP, when glutamine is the substrate; GTP has no effect on the reaction when ammonia is the substrate. The allosteric effector GTP functions by stabilizing the protein conformation that binds the tetrahedral intermediate(s) formed during glutamine hydrolysis. Inhibited by the product CTP, via allosteric rather than competitive inhibition. Its function is as follows. Catalyzes the ATP-dependent amination of UTP to CTP with either L-glutamine or ammonia as the source of nitrogen. Regulates intracellular CTP levels through interactions with the four ribonucleotide triphosphates. In Cereibacter sphaeroides (strain ATCC 17029 / ATH 2.4.9) (Rhodobacter sphaeroides), this protein is CTP synthase.